Reading from the N-terminus, the 99-residue chain is Large ribosomal subunit protein uL23 (99 aa).

The protein belongs to the universal ribosomal protein uL23 family. In terms of assembly, part of the 50S ribosomal subunit. Contacts protein L29, and trigger factor when it is bound to the ribosome.

One of the early assembly proteins it binds 23S rRNA. One of the proteins that surrounds the polypeptide exit tunnel on the outside of the ribosome. Forms the main docking site for trigger factor binding to the ribosome. The sequence is that of Large ribosomal subunit protein uL23 from Synechococcus sp. (strain JA-2-3B'a(2-13)) (Cyanobacteria bacterium Yellowstone B-Prime).